The sequence spans 1217 residues: Endonuclease YhcR (1217 aa).

Residues 1–46 form the signal peptide; sequence MLSVEMISRQNRCHYVYKGGNMMRRILHIVLITALMFLNVMYTFEA. The TNase-like domain occupies 376–517; the sequence is GEYEGIVDRV…KKDQKGIWNE (142 aa). Catalysis depends on residues Arg404, Glu412, and Arg460. Positions 590–828 are phosphoesterase; the sequence is LRILSMNDLH…VIFAAHNHQV (239 aa). Residues Asp597, His599, Asp647, Asn680, His792, and His824 each coordinate a divalent metal cation. A 5'-nucleotidase region spans residues 829-1085; that stretch reads VNGEVNGKLI…AYTKEGRIKL (257 aa). Substrate is bound by residues Phe965 and 1035–1042; that span reads FMATATGA. The segment at 1087-1142 is disordered; it reads EASDIEDPVTEDPITEEPGDDPGTEDPIKEDPRPGEDLPDIKETPGTAPVHQLPPS. The span at 1089–1110 shows a compositional bias: acidic residues; that stretch reads SDIEDPVTEDPITEEPGDDPGT. Residues 1112–1129 show a composition bias toward basic and acidic residues; sequence DPIKEDPRPGEDLPDIKE. The LPXTG sorting signal motif lies at 1182–1186; sequence LPDTS. At Thr1185 the chain carries Pentaglycyl murein peptidoglycan amidated threonine. The propeptide at 1186 to 1217 is removed by sortase; the sequence is SAGYYNFMVIGAAVTLSGTYLYVRRKRSASRT.

In the C-terminal section; belongs to the 5'-nucleotidase family. Requires Ca(2+) as cofactor. It depends on Mn(2+) as a cofactor.

It is found in the secreted. The protein localises to the cell wall. With respect to regulation, requires a minimum of 0.1 mM of calcium for a significant activity. Maximal activity was observed with concentrations of calcium between 1 to 5 mM. Is 10-fold less active with the corresponding concentrations of manganese. Inhibited by NaCl at concentrations of 100 mM and higher. Sugar-nonspecific endonuclease that yields nucleotide 3'-monophosphate products. No 5'-nucleotidase activity was detected, using 5'-AMP as the substrate, in the presence of diverse divalent metals and with various pH values. In Bacillus subtilis (strain 168), this protein is Endonuclease YhcR (yhcR).